We begin with the raw amino-acid sequence, 318 residues long: Nuclear egress protein 1 (318 aa).

The CCCH-type zinc-finger motif lies at 129–239; that stretch reads CLRLSPFGHS…HLLLQGTSLH (111 aa).

The protein belongs to the herpesviridae NEC1 protein family. As to quaternary structure, forms a heterodimeric viral nuclear egress complex (NEC) with NEC2. Interacts with capsid vertex specific component 2/CVC2; this interaction directs the capsid to the host inner nuclear membrane to initiate budding. Phosphorylated at serine residues in the N-terminus. This phosphorylation regulates the localization within the inner nuclear membrane.

It localises to the host nucleus inner membrane. In terms of biological role, plays an essential role in virion nuclear egress, the first step of virion release from infected cell. Within the host nucleus, NEC1 interacts with the newly formed capsid through the vertexes and directs it to the inner nuclear membrane by associating with NEC2. Induces the budding of the capsid at the inner nuclear membrane as well as its envelopment into the perinuclear space. There, the NEC1/NEC2 complex promotes the fusion of the enveloped capsid with the outer nuclear membrane and the subsequent release of the viral capsid into the cytoplasm where it will reach the secondary budding sites in the host Golgi or trans-Golgi network. This is Nuclear egress protein 1 from Homo sapiens (Human).